A 155-amino-acid polypeptide reads, in one-letter code: Endoribonuclease YbeY (155 aa).

Residues histidine 110, histidine 114, and histidine 120 each contribute to the Zn(2+) site.

It belongs to the endoribonuclease YbeY family. The cofactor is Zn(2+).

The protein resides in the cytoplasm. Functionally, single strand-specific metallo-endoribonuclease involved in late-stage 70S ribosome quality control and in maturation of the 3' terminus of the 16S rRNA. This is Endoribonuclease YbeY from Deinococcus geothermalis (strain DSM 11300 / CIP 105573 / AG-3a).